A 64-amino-acid polypeptide reads, in one-letter code: Alpha-conotoxin SI (64 aa).

Positions 1 to 21 (MGMRMMFTVFLLVVLATTVVS) are cleaved as a signal peptide. Residues 22–49 (FPSDRASDGRDDEAKDERSDMHESDRKE) constitute a propeptide that is removed on maturation. The interval 23-47 (PSDRASDGRDDEAKDERSDMHESDR) is disordered. Residues 26–47 (RASDGRDDEAKDERSDMHESDR) show a composition bias toward basic and acidic residues. Intrachain disulfides connect Cys51–Cys56 and Cys52–Cys62. Cys62 carries the post-translational modification Cysteine amide.

Belongs to the conotoxin A superfamily. In terms of tissue distribution, expressed by the venom duct.

It is found in the secreted. Alpha-conotoxins act on postsynaptic membranes, they bind to the nicotinic acetylcholine receptors (nAChR) and thus inhibit them. Is active on muscle nAChR (IC(50)=113 nM on adult subtype (alpha-1-beta-1-gamma-delta/CHRNA1-CHRNB1-CHRNG-CHRND) and IC(50)=142 nM on fetal subtype (alpha-1-beta-1-delta-epsilon/CHRNA1-CHRNB1-CHRND-CHRNE)). On mice muscle receptors, its higher affinity site is the alpha/delta nAChR subunit interface. On Torpedo receptors, it does not distinguish between alpha/delta and alpha/gamma acetylcholine-binding sites. In vivo, causes paralysis followed by death when injected into goldfish. In contrast, has no effect on mice, when similar doses are intraperitoneally or intracerebrally injected. In Conus striatus (Striated cone), this protein is Alpha-conotoxin SI.